The following is a 464-amino-acid chain: MDYDFKVKLTGERERVEDLFEYEGCKVGRGTYGHVYKAKRKDGRDDRDYALKQIEGTGISMSACREIALLRELKHPNVISLQKVFLSHADRKVWLLFDFAEHDLWHIIKFHRASKANKKPVQLPRGMVKSLLYQILDGIHYLHANWVLHRDLKPANILVMGEGPERGRVKIADMGFARLFNSPLKPLADLDPVVVTFWYRAPELLLGARHYTKAIDIWAIGCIFAELLTSEPIFHCRQEDIKTSNPYHHDQLDRIFNVMGFPADKDWEDIKKMPEHSTLIKDFRRNTYTNCSLIKYMEKHKVKPDSKTFHLLQKLLTMDPIKRISSEQAMQDPYFLEDPLPTSDVFAGCQIPYPKREFLTEEEPDDKGDKKNQQQQQGNNHTNGTGHPGNQDNSHAQGPPLKKVRVVPPTTTSGGLIMTSDYQRSNPHAAYQNPGPSTSQPQSSMGYSSTSQQPPQYSHQTHRY.

Residues 1 to 15 are interaction with CCNC; it reads MDYDFKVKLTGERER. The region spanning 21 to 335 is the Protein kinase domain; it reads EYEGCKVGRG…SEQAMQDPYF (315 aa). Residues 27–35 and Lys52 contribute to the ATP site; that span reads VGRGTYGHV. Asp151 functions as the Proton acceptor in the catalytic mechanism. The disordered stretch occupies residues 361–464; the sequence is EEEPDDKGDK…PQYSHQTHRY (104 aa). The span at 373 to 391 shows a compositional bias: low complexity; sequence QQQQQGNNHTNGTGHPGNQ. 2 stretches are compositionally biased toward polar residues: residues 409–426 and 434–446; these read PTTTSGGLIMTSDYQRSN and PGPSTSQPQSSMG. Over residues 447-464 the composition is skewed to low complexity; the sequence is YSSTSQQPPQYSHQTHRY.

This sequence belongs to the protein kinase superfamily. CMGC Ser/Thr protein kinase family. CDC2/CDKX subfamily. In terms of assembly, component of the Mediator complex. Interacts with ccnc. Mg(2+) serves as cofactor.

It is found in the nucleus. It carries out the reaction L-seryl-[protein] + ATP = O-phospho-L-seryl-[protein] + ADP + H(+). It catalyses the reaction L-threonyl-[protein] + ATP = O-phospho-L-threonyl-[protein] + ADP + H(+). The enzyme catalyses [DNA-directed RNA polymerase] + ATP = phospho-[DNA-directed RNA polymerase] + ADP + H(+). In terms of biological role, component of the Mediator complex, a coactivator involved in regulated gene transcription of nearly all RNA polymerase II-dependent genes. Mediator functions as a bridge to convey information from gene-specific regulatory proteins to the basal RNA polymerase II transcription machinery. Mediator is recruited to promoters by direct interactions with regulatory proteins and serves as a scaffold for the assembly of a functional pre-initiation complex with RNA polymerase II and the general transcription factors. Phosphorylates the CTD (C-terminal domain) of the large subunit of RNA polymerase II (RNAp II), which may inhibit the formation of a transcription initiation complex. In Xenopus tropicalis (Western clawed frog), this protein is Cyclin-dependent kinase 8 (cdk8).